We begin with the raw amino-acid sequence, 472 residues long: Serine/threonine-protein phosphatase T (472 aa).

3 TPR repeats span residues 7 to 40 (ADKLKQLGNAAFSERKWHLAIDMYTKAIELTKTP), 41 to 73 (TLFCNRALAELRAELPGAALADADAALGIEPTF), and 74 to 107 (AKAYYHKASAYLSLGKHKQALTNYKKVVDLAPQN). The Mn(2+) site is built by D217, H219, D246, and N278. H279 (proton donor/acceptor) is an active-site residue. H327 and H403 together coordinate Mn(2+).

The protein belongs to the PPP phosphatase family. PP-5 (PP-T) subfamily. It depends on Mg(2+) as a cofactor. Requires Mn(2+) as cofactor.

The protein localises to the cytoplasm. Its subcellular location is the cytosol. It is found in the nucleus. The enzyme catalyses O-phospho-L-seryl-[protein] + H2O = L-seryl-[protein] + phosphate. It catalyses the reaction O-phospho-L-threonyl-[protein] + H2O = L-threonyl-[protein] + phosphate. Activated by arachidonic acid. May function as a protein phosphatase. The polypeptide is Serine/threonine-protein phosphatase T (Trypanosoma brucei brucei (strain 927/4 GUTat10.1)).